The chain runs to 195 residues: Peptidyl-tRNA hydrolase (195 aa).

Tyrosine 14 is a binding site for tRNA. Histidine 19 serves as the catalytic Proton acceptor. Tyrosine 64 and asparagine 66 together coordinate tRNA.

This sequence belongs to the PTH family. In terms of assembly, monomer.

The protein localises to the cytoplasm. The catalysed reaction is an N-acyl-L-alpha-aminoacyl-tRNA + H2O = an N-acyl-L-amino acid + a tRNA + H(+). Its function is as follows. Hydrolyzes ribosome-free peptidyl-tRNAs (with 1 or more amino acids incorporated), which drop off the ribosome during protein synthesis, or as a result of ribosome stalling. In terms of biological role, catalyzes the release of premature peptidyl moieties from peptidyl-tRNA molecules trapped in stalled 50S ribosomal subunits, and thus maintains levels of free tRNAs and 50S ribosomes. This is Peptidyl-tRNA hydrolase from Desulforudis audaxviator (strain MP104C).